The sequence spans 373 residues: Probable neutral protease 2 homolog MCYG_05201 (373 aa).

An N-terminal signal peptide occupies residues 1 to 19 (MQFFTALAAVGALVAPALA). Residues 20-187 (LPTQVPANQS…AHIVGTIDKR (168 aa)) constitute a propeptide that is removed on maturation. Intrachain disulfides connect C195/C265 and C272/C290. H314 serves as a coordination point for Zn(2+). E315 is an active-site residue. Zn(2+) is bound by residues H318 and D329.

It belongs to the peptidase M35 family. Zn(2+) serves as cofactor.

The protein localises to the secreted. It catalyses the reaction Preferential cleavage of bonds with hydrophobic residues in P1'. Also 3-Asn-|-Gln-4 and 8-Gly-|-Ser-9 bonds in insulin B chain.. In terms of biological role, probable secreted metalloprotease that shows high activities on basic nuclear substrates such as histone and protamine. May be involved in virulence. In Arthroderma otae (strain ATCC MYA-4605 / CBS 113480) (Microsporum canis), this protein is Probable neutral protease 2 homolog MCYG_05201.